The sequence spans 184 residues: Photosystem I assembly protein Ycf4 (184 aa).

2 helical membrane passes run 21-41 (YFWA…GLSS) and 63-83 (IIMT…WLTI).

The protein belongs to the Ycf4 family.

It localises to the plastid. Its subcellular location is the chloroplast thylakoid membrane. Its function is as follows. Seems to be required for the assembly of the photosystem I complex. The chain is Photosystem I assembly protein Ycf4 from Gracilaria tenuistipitata var. liui (Red alga).